A 367-amino-acid chain; its full sequence is Voltage-gated potassium channel subunit beta-2 (367 aa).

Phosphoserine is present on residues Ser-9, Ser-14, and Ser-20. At Arg-28 the chain carries Asymmetric dimethylarginine; alternate. Arg-28 is modified (omega-N-methylarginine; alternate). Residue Ser-31 is modified to Phosphoserine. NADP(+) is bound by residues Thr-56, Trp-57, Gln-63, and Asp-85. Residue Tyr-90 is the Proton donor/acceptor of the active site. Ser-112 carries the post-translational modification Phosphoserine. At Lys-124 the chain carries N6-acetyllysine. NADP(+) is bound by residues Asn-158, Ser-188, Arg-189, Gln-214, Trp-243, Ser-244, Pro-245, Leu-246, Ala-247, Cys-248, Lys-254, Tyr-262, Arg-264, Gly-323, Ser-325, Gln-329, Glu-332, and Asn-333.

The protein belongs to the shaker potassium channel beta subunit family. Homotetramer. Interaction with tetrameric potassium channel alpha subunits gives rise to a heterooctamer. Identified in potassium channel complexes containing KCNA1, KCNA2, KCNA4, KCNA5, KCNA6, KCNAB1, KCNAB2 and KCND3. Interacts (in unphosphorylated form) with MAPRE1. Forms a ternary complex with SQSTM1 and PRKCZ. In terms of processing, phosphorylated by PRKCZ; may be regulated by incorporation in a complex composed of PRKCZ and SQSTM1. Detected in the juxtaparanodal region of nodes of Ranvier in myelinated nerve fibers in the spinal cord (at protein level).

It localises to the cytoplasm. The protein resides in the membrane. The protein localises to the cell membrane. Its subcellular location is the cell projection. It is found in the axon. It localises to the synapse. The protein resides in the synaptosome. The protein localises to the cytoskeleton. The enzyme catalyses hydroxyacetone + NADP(+) = methylglyoxal + NADPH + H(+). It catalyses the reaction (E)-4-oxonon-2-en-1-ol + NADP(+) = (E)-4-oxonon-2-enal + NADPH + H(+). Regulatory subunit of the voltage-gated potassium (Kv) Shaker channels composed of pore-forming and potassium-conducting alpha subunits and of regulatory beta subunits. The beta-2/KCNAB2 cytoplasmic subunit promotes potassium channel closure via a mechanism that does not involve physical obstruction of the channel pore. Promotes the inactivation of Kv1.4/KCNA4 and Kv1.5/KCNA5 alpha subunit-containing channels. Displays nicotinamide adenine dinucleotide phosphate (NADPH)-dependent aldoketoreductase activity by catalyzing the NADPH-dependent reduction of a wide range of aldehyde and ketone substrates. Substrate specificity includes methylglyoxal, 9,10-phenanthrenequinone, prostaglandin J2, 4-nitrobenzaldehyde, 4-nitroacetophenone and 4-oxo-trans-2-nonenal (in vitro, no physiological substrate identified yet). The binding of oxidized and reduced nucleotide alters Kv channel gating and may contribute to dynamic fine tuning of cell excitability. Contributes to the regulation of nerve signaling, and prevents neuronal hyperexcitability. The protein is Voltage-gated potassium channel subunit beta-2 (KCNAB2) of Bos taurus (Bovine).